We begin with the raw amino-acid sequence, 195 residues long: Achaete-scute homolog 1b (195 aa).

Residues 66–118 (MAVARRNERERNRVKQVNMGFQTLRQHVPNGAANKKMSKVETLRSAVEYIRAL) enclose the bHLH domain. The disordered stretch occupies residues 141–164 (VSNAYSAGPESPHSAYSSDEGSYE).

Efficient DNA binding requires dimerization with another bHLH protein. In the 24 hours embryo, expressed in hindbrain close to the anterior and posterior boundaries of rhombomeres 2-6 and in ventral cells close to the floor plate of most rhombomeres. Also expressed in the telencephalon, diencephalon, tegmentum and spinal cord at sites distinct from those expressing ascl1a. Not expressed in the adenohypophysis.

It localises to the nucleus. Functionally, transcriptional regulator. May mediate transcription activation by binding to the E box-containing promoter. Involved in neurogenesis. Involved in maintaining rhombomere boundaries in the hindbrain, probably via up-regulation of delta expression. May mediate transcription activation by binding to the E box-containing promoter. The sequence is that of Achaete-scute homolog 1b from Danio rerio (Zebrafish).